A 594-amino-acid polypeptide reads, in one-letter code: Cytoplasmic polyadenylation element-binding protein 2 (594 aa).

The span at 72–90 shows a compositional bias: basic and acidic residues; it reads KEREKVDEEKEGVERREEN. 2 disordered regions span residues 72 to 91 and 367 to 388; these read KERE…EENG and GGGF…STSE. The segment covering 367–378 has biased composition (gly residues); sequence GGGFNSGSGSGN. In terms of domain architecture, RRM spans 458-540; that stretch reads LVAFIGGVPR…KRVEIKPYFF (83 aa).

In terms of biological role, cytoplasmic polyadenylation element binding protein that binds to and regulates the translation of specific mRNAs. This Caenorhabditis japonica protein is Cytoplasmic polyadenylation element-binding protein 2 (cpb-2).